The chain runs to 419 residues: S-adenosylmethionine synthase (419 aa).

Residue histidine 14 coordinates ATP. Aspartate 16 lines the Mg(2+) pocket. Glutamate 42 contacts K(+). Positions 55 and 98 each coordinate L-methionine. The tract at residues 98-108 (QSQDIYQGVDR) is flexible loop. Residues 164–166 (DSK), 242–243 (KF), aspartate 251, 257–258 (RK), alanine 274, and lysine 278 each bind ATP. Residue aspartate 251 participates in L-methionine binding. Lysine 282 provides a ligand contact to L-methionine.

This sequence belongs to the AdoMet synthase family. Homotetramer; dimer of dimers. Mg(2+) serves as cofactor. It depends on K(+) as a cofactor.

It is found in the cytoplasm. The enzyme catalyses L-methionine + ATP + H2O = S-adenosyl-L-methionine + phosphate + diphosphate. The protein operates within amino-acid biosynthesis; S-adenosyl-L-methionine biosynthesis; S-adenosyl-L-methionine from L-methionine: step 1/1. Catalyzes the formation of S-adenosylmethionine (AdoMet) from methionine and ATP. The overall synthetic reaction is composed of two sequential steps, AdoMet formation and the subsequent tripolyphosphate hydrolysis which occurs prior to release of AdoMet from the enzyme. The polypeptide is S-adenosylmethionine synthase (Christiangramia forsetii (strain DSM 17595 / CGMCC 1.15422 / KT0803) (Gramella forsetii)).